The following is a 61-amino-acid chain: Small ribosomal subunit protein uS14B (61 aa).

4 residues coordinate Zn(2+): Cys-24, Cys-27, Cys-40, and Cys-43.

Belongs to the universal ribosomal protein uS14 family. Zinc-binding uS14 subfamily. Part of the 30S ribosomal subunit. Contacts proteins S3 and S10. Zn(2+) is required as a cofactor.

In terms of biological role, binds 16S rRNA, required for the assembly of 30S particles and may also be responsible for determining the conformation of the 16S rRNA at the A site. This chain is Small ribosomal subunit protein uS14B, found in Oceanobacillus iheyensis (strain DSM 14371 / CIP 107618 / JCM 11309 / KCTC 3954 / HTE831).